The following is a 248-amino-acid chain: Histone H1, gonadal (248 aa).

Disordered stretches follow at residues 1–46 and 115–248; these read PGSP…PPVL and AVAK…KARK. Residues 9–39 are compositionally biased toward basic residues; the sequence is ASPRKSPRKSPKKSPRKASASPRRKAKRARA. Positions 41 to 115 constitute an H15 domain; it reads THPPVLEMVQ…GASGRFRVGA (75 aa). Positions 118-248 are enriched in basic residues; sequence KPKKAKKTSA…KRRSPKKARK (131 aa).

The protein belongs to the histone H1/H5 family. Sperm.

It is found in the nucleus. The protein resides in the chromosome. Its function is as follows. Histones H1 are necessary for the condensation of nucleosome chains into higher-order structures. The chain is Histone H1, gonadal from Parechinus angulosus (Angulate sea urchin).